The chain runs to 397 residues: MLTPILSSASCSWTPTSQFPHSWHSSPSFLTKPLNLPFTESYKTAKRPTPNYSFKVQAMIEKEVAVSHKPDAFLRESDMGSNVTSNSSSVRGRFEKMRREAQDSVCLAIEKADGGAKFKEDVWSRPGGGGGHSSVLQDGAVFEKAGVNVSVVYGVMPPEAYRAARPTDNGNVKPGPIPFFAAGVSSVLHPKNPFAPTLHFNYRYFETDAPKDAPGAPRQWWFGGGTDFTPAYIFEEDVKHFHSVQKAACDKFDASFYPRFKKWCVDYFYIKHRDERRGLGGIFFDDFNDYDQEMLLSFSTECANSVIPAYIPIVEKRKDTPFTDKHKAWQQLRRGRYVEFNLVYDRGTTFGLKTGGRIESILVSLPLTARWEYDHKPEEGTEEWKLLDACINPKEWI.

The tract at residues 76-95 (ESDMGSNVTSNSSSVRGRFE) is disordered. Residues 79-90 (MGSNVTSNSSSV) are compositionally biased toward polar residues. Positions 135–144 (VLQDGAVFEK) are important for dimerization. A substrate-binding site is contributed by S185. The Proton donor role is filled by H199. Residues 201-203 (NYR) and 355-360 (GGRIES) contribute to the substrate site. Residues 337-372 (YVEFNLVYDRGTTFGLKTGGRIESILVSLPLTARWE) form an important for dimerization region.

It belongs to the aerobic coproporphyrinogen-III oxidase family. In terms of assembly, homodimer.

Its subcellular location is the plastid. The protein localises to the chloroplast. It carries out the reaction coproporphyrinogen III + O2 + 2 H(+) = protoporphyrinogen IX + 2 CO2 + 2 H2O. The protein operates within porphyrin-containing compound metabolism; protoporphyrin-IX biosynthesis; protoporphyrinogen-IX from coproporphyrinogen-III (O2 route): step 1/1. In terms of biological role, involved in the heme and chlorophyll biosynthesis. Catalyzes the aerobic oxidative decarboxylation of propionate groups of rings A and B of coproporphyrinogen-III to yield the vinyl groups in protoporphyrinogen-IX. The chain is Oxygen-dependent coproporphyrinogen-III oxidase, chloroplastic (CPX) from Nicotiana tabacum (Common tobacco).